The primary structure comprises 426 residues: Serine--tRNA ligase (426 aa).

231 to 233 (TAE) contacts L-serine. Residue 262–264 (RSE) coordinates ATP. Glu-285 lines the L-serine pocket. 349–352 (EISS) lines the ATP pocket. An L-serine-binding site is contributed by Ser-384.

The protein belongs to the class-II aminoacyl-tRNA synthetase family. Type-1 seryl-tRNA synthetase subfamily. In terms of assembly, homodimer. The tRNA molecule binds across the dimer.

The protein localises to the cytoplasm. It carries out the reaction tRNA(Ser) + L-serine + ATP = L-seryl-tRNA(Ser) + AMP + diphosphate + H(+). The catalysed reaction is tRNA(Sec) + L-serine + ATP = L-seryl-tRNA(Sec) + AMP + diphosphate + H(+). It participates in aminoacyl-tRNA biosynthesis; selenocysteinyl-tRNA(Sec) biosynthesis; L-seryl-tRNA(Sec) from L-serine and tRNA(Sec): step 1/1. Functionally, catalyzes the attachment of serine to tRNA(Ser). Is also able to aminoacylate tRNA(Sec) with serine, to form the misacylated tRNA L-seryl-tRNA(Sec), which will be further converted into selenocysteinyl-tRNA(Sec). The polypeptide is Serine--tRNA ligase (Laribacter hongkongensis (strain HLHK9)).